A 330-amino-acid chain; its full sequence is MKSFKIISLLLAILFLASCQTNTASDDEALETVEVMLDWYPNAVHTFLYVAIENGYFAEEGLDVDIVFPTNPTDPIQLTASGAIPLALSYQPDVILARSKDLPVVSVASVVRSPLNHVMFLAEQDFDSPADLVGLTVGYPGIPVNEPILKTMVEAAGGDYEQVHLMDVGFELGASIVSGRADAVVGTYINHEYPVLKHEGHDISYFNPVDYGVPEYDELVLISNEAYVEESGEVLAAFWRAALKGYEWMVENPDEALNVLLTNQDEANFPLIQEVEEESLSILLEKMENPNGPFGGQDAESWEEVISWLDAHDWLEQPVVAEDAFSSITD.

An N-terminal signal peptide occupies residues 1 to 18; that stretch reads MKSFKIISLLLAILFLAS. The N-palmitoyl cysteine moiety is linked to residue C19. C19 is lipidated: S-diacylglycerol cysteine. Substrate contacts are provided by residues 38–39, Y90, N145, Y188, and E192; that span reads DW.

It belongs to the NMT1 family. The complex is likely composed of an ATP-binding protein (ThiZ), a transmembrane protein (ThiX) and a solute-binding protein (ThiY).

The protein resides in the cell membrane. The protein operates within cofactor biosynthesis; thiamine diphosphate biosynthesis. Participates in a thiamine pyrimidine salvage pathway as part of the ABC transporter complex ThiXYZ involved in the import of thiamine degradation products. Binds the formylaminopyrimidine N-formyl-4-amino-5-aminomethyl-2-methylpyrimidine (FAMP). Does not bind thiamine. The sequence is that of Formylaminopyrimidine-binding protein from Halalkalibacterium halodurans (strain ATCC BAA-125 / DSM 18197 / FERM 7344 / JCM 9153 / C-125) (Bacillus halodurans).